Consider the following 790-residue polypeptide: Aryl hydrocarbon receptor nuclear translocator (790 aa).

A compositionally biased stretch (polar residues) spans methionine 1 to methionine 10. Residues methionine 1 to glutamate 96 are disordered. Alanine 2 carries the post-translational modification N-acetylalanine. Gly residues predominate over residues proline 26 to alanine 35. A Glycyl lysine isopeptide (Lys-Gly) (interchain with G-Cter in SUMO2) cross-link involves residue lysine 58. Residues leucine 60–glutamate 96 are compositionally biased toward basic and acidic residues. Position 77 is a phosphoserine (serine 77). Residues arginine 88 to lysine 128 are DNA-binding. The bHLH domain maps to leucine 89–leucine 142. Residues leucine 112–isoleucine 168 are required for heterodimer formation with HIF1A. The segment at leucine 112–isoleucine 264 is required for heterodimer formation with EPAS1. PAS domains lie at aspartate 161–arginine 235 and proline 349–lysine 419. Positions leucine 167–alanine 171 are mediates the transcription activity and dimerization of the AHR:ARNT complex. The PAC domain maps to serine 424 to serine 467. Composition is skewed to polar residues over residues lysine 465–leucine 490, threonine 520–proline 537, and threonine 661–proline 679. Disordered regions lie at residues lysine 465–leucine 492, proline 514–leucine 543, threonine 661–phenylalanine 716, and proline 728–glutamate 790. Residues proline 683 to serine 697 are compositionally biased toward low complexity. Over residues serine 741–glycine 755 the composition is skewed to polar residues.

Monomer. Homodimer only upon binding to a DNA. Efficient DNA binding requires dimerization with another bHLH protein. Interacts with TACC3. Interacts with HIF1A, EPAS1, NPAS1 and NPAS3; forms a heterodimer that binds core DNA sequence 5'-TACGTG-3' within the hypoxia response element (HRE) of target gene promoters. Forms a heterodimer with AHRR, as well as with other bHLH proteins. Interacts with NOCA7. Interacts with TACC3. Interacts with AHR; the heterodimer ARNT:AHR binds to core DNA sequence 5'-TGCGTG-3' within the dioxin response element (DRE) of target gene promoters and activates their transcription. Interacts with SIM1 and NPAS4.

Its subcellular location is the nucleus. Its function is as follows. Required for activity of the AHR. Upon ligand binding, AHR translocates into the nucleus, where it heterodimerizes with ARNT and induces transcription by binding to xenobiotic response elements (XRE). Not required for the ligand-binding subunit to translocate from the cytosol to the nucleus after ligand binding. The complex initiates transcription of genes involved in the regulation of a variety of biological processes, including angiogenesis, hematopoiesis, drug and lipid metabolism, cell motility and immune modulation. The heterodimer binds to core DNA sequence 5'-TACGTG-3' within the hypoxia response element (HRE) of target gene promoters and functions as a transcriptional regulator of the adaptive response to hypoxia. The heterodimer ARNT:AHR binds to core DNA sequence 5'-TGCGTG-3' within the dioxin response element (DRE) of target gene promoters and activates their transcription. This is Aryl hydrocarbon receptor nuclear translocator (ARNT) from Bos taurus (Bovine).